We begin with the raw amino-acid sequence, 212 residues long: UPF0111 protein PH1389 (212 aa).

It belongs to the UPF0111 family.

The sequence is that of UPF0111 protein PH1389 from Pyrococcus horikoshii (strain ATCC 700860 / DSM 12428 / JCM 9974 / NBRC 100139 / OT-3).